Reading from the N-terminus, the 391-residue chain is Multidrug resistance protein MdtL (391 aa).

The Cytoplasmic segment spans residues M1 to R3. The chain crosses the membrane as a helical span at residues F4–V24. At G25–H41 the chain is on the periplasmic side. A helical transmembrane segment spans residues I42–A62. The Cytoplasmic portion of the chain corresponds to D63 to K68. The helical transmembrane segment at P69–E89 threads the bilayer. Over T90 to T92 the chain is Periplasmic. A helical transmembrane segment spans residues L93–F113. Over A114–S130 the chain is Cytoplasmic. A helical membrane pass occupies residues L131–M151. The Periplasmic portion of the chain corresponds to L152–Q157. The helical transmembrane segment at S158 to L178 threads the bilayer. Residues K179–S198 are Cytoplasmic-facing. Residues L199 to F221 traverse the membrane as a helical segment. The Periplasmic portion of the chain corresponds to V222–M244. The chain crosses the membrane as a helical span at residues A245–F265. Topologically, residues K266–R268 are cytoplasmic. A helical membrane pass occupies residues T269–P289. Over S290–A292 the chain is Periplasmic. Residues V293–M313 form a helical membrane-spanning segment. The Cytoplasmic portion of the chain corresponds to S314–T330. Residues L331–I351 traverse the membrane as a helical segment. The Periplasmic segment spans residues S352–N355. Residues M356–A376 traverse the membrane as a helical segment. Residues P377 to A391 lie on the Cytoplasmic side of the membrane.

Belongs to the major facilitator superfamily. DHA1 family. MdtL (TC 2.A.1.2.22) subfamily.

It is found in the cell inner membrane. In terms of biological role, confers resistance to chloramphenicol. This chain is Multidrug resistance protein MdtL (mdtL), found in Escherichia coli O157:H7.